Consider the following 439-residue polypeptide: Glucose-1-phosphate adenylyltransferase (439 aa).

Residues Gly-172, 187-188, and Ser-219 contribute to the alpha-D-glucose 1-phosphate site; that span reads EK.

It belongs to the bacterial/plant glucose-1-phosphate adenylyltransferase family. In terms of assembly, homotetramer.

The enzyme catalyses alpha-D-glucose 1-phosphate + ATP + H(+) = ADP-alpha-D-glucose + diphosphate. It functions in the pathway glycan biosynthesis; glycogen biosynthesis. Involved in the biosynthesis of ADP-glucose, a building block required for the elongation reactions to produce glycogen. Catalyzes the reaction between ATP and alpha-D-glucose 1-phosphate (G1P) to produce pyrophosphate and ADP-Glc. This chain is Glucose-1-phosphate adenylyltransferase, found in Synechocystis sp. (strain ATCC 27184 / PCC 6803 / Kazusa).